Reading from the N-terminus, the 127-residue chain is Ribonuclease P protein component (127 aa).

This sequence belongs to the RnpA family. Consists of a catalytic RNA component (M1 or rnpB) and a protein subunit.

It carries out the reaction Endonucleolytic cleavage of RNA, removing 5'-extranucleotides from tRNA precursor.. In terms of biological role, RNaseP catalyzes the removal of the 5'-leader sequence from pre-tRNA to produce the mature 5'-terminus. It can also cleave other RNA substrates such as 4.5S RNA. The protein component plays an auxiliary but essential role in vivo by binding to the 5'-leader sequence and broadening the substrate specificity of the ribozyme. The polypeptide is Ribonuclease P protein component (Synechococcus sp. (strain RCC307)).